Here is a 75-residue protein sequence, read N- to C-terminus: ATP synthase subunit c (75 aa).

The next 2 helical transmembrane spans lie at 12–32 (LASIGYGLAAIGSAIGVGIVV) and 49–69 (LTVLMYVGVAFTEALALIGIG).

This sequence belongs to the ATPase C chain family. In terms of assembly, F-type ATPases have 2 components, F(1) - the catalytic core - and F(0) - the membrane proton channel. F(1) has five subunits: alpha(3), beta(3), gamma(1), delta(1), epsilon(1). F(0) has three main subunits: a(1), b(2) and c(10-14). The alpha and beta chains form an alternating ring which encloses part of the gamma chain. F(1) is attached to F(0) by a central stalk formed by the gamma and epsilon chains, while a peripheral stalk is formed by the delta and b chains.

The protein localises to the cell membrane. F(1)F(0) ATP synthase produces ATP from ADP in the presence of a proton or sodium gradient. F-type ATPases consist of two structural domains, F(1) containing the extramembraneous catalytic core and F(0) containing the membrane proton channel, linked together by a central stalk and a peripheral stalk. During catalysis, ATP synthesis in the catalytic domain of F(1) is coupled via a rotary mechanism of the central stalk subunits to proton translocation. In terms of biological role, key component of the F(0) channel; it plays a direct role in translocation across the membrane. A homomeric c-ring of between 10-14 subunits forms the central stalk rotor element with the F(1) delta and epsilon subunits. This Tropheryma whipplei (strain TW08/27) (Whipple's bacillus) protein is ATP synthase subunit c.